The following is a 178-amino-acid chain: Transcription factor E (178 aa).

Residues 3–86 (AHEALAEIAG…YWRITDEPIQ (84 aa)) form the HTH TFE/IIEalpha-type domain.

Belongs to the TFE family. Monomer. Interaction with RNA polymerase subunits RpoF and RpoE is necessary for Tfe stimulatory transcription activity. Able to interact with Tbp and RNA polymerase in the absence of DNA promoter. Interacts both with the preinitiation and elongation complexes.

Its function is as follows. Transcription factor that plays a role in the activation of archaeal genes transcribed by RNA polymerase. Facilitates transcription initiation by enhancing TATA-box recognition by TATA-box-binding protein (Tbp), and transcription factor B (Tfb) and RNA polymerase recruitment. Not absolutely required for transcription in vitro, but particularly important in cases where Tbp or Tfb function is not optimal. It dynamically alters the nucleic acid-binding properties of RNA polymerases by stabilizing the initiation complex and destabilizing elongation complexes. Seems to translocate with the RNA polymerase following initiation and acts by binding to the non template strand of the transcription bubble in elongation complexes. This Thermofilum pendens (strain DSM 2475 / Hrk 5) protein is Transcription factor E.